Reading from the N-terminus, the 121-residue chain is HTH-type transcriptional regulator Rv1152 (121 aa).

One can recognise an HTH gntR-type domain in the interval 15–83 (KPLFDQLRTQ…GRFGTFISRF (69 aa)). A DNA-binding region (H-T-H motif) is located at residues 43–62 (VRDLAGQLGVAANTVARAYR).

It is found in the cytoplasm. Its subcellular location is the secreted. It localises to the cell wall. Its function is as follows. Transcriptional regulator that modulates resistance to vancomycin and aminoglycosides. Negatively regulates the expression of several genes responsive to vancomycin, resulting in decreased susceptibility of bacteria to vancomycin. Negatively regulates the expression of genes encoding the ribosome binding protein Hsp, the small subunit of sulfate adenylyltransferase CysD, the L-lysine-epsilon aminotransferase LAT and the protease HtpX. Also modulates purine metabolism and aminoglycoside antibiotic resistance. Negatively regulates the expression of purine metabolism-related genes and the accumulation of purine metabolites, which affects aminoglycoside antibiotic resistance. This Mycobacterium tuberculosis (strain ATCC 25618 / H37Rv) protein is HTH-type transcriptional regulator Rv1152.